A 222-amino-acid polypeptide reads, in one-letter code: Cytidylate kinase 2 (222 aa).

7-15 (GPSGAGKGT) contacts ATP.

Belongs to the cytidylate kinase family. Type 1 subfamily.

It localises to the cytoplasm. It catalyses the reaction CMP + ATP = CDP + ADP. The catalysed reaction is dCMP + ATP = dCDP + ADP. The sequence is that of Cytidylate kinase 2 from Haemophilus influenzae (strain ATCC 51907 / DSM 11121 / KW20 / Rd).